Here is a 115-residue protein sequence, read N- to C-terminus: NADH-ubiquinone oxidoreductase chain 3 (115 aa).

Transmembrane regions (helical) follow at residues 3 to 23 (LMLA…IMFW), 55 to 75 (FFLV…LLSL), and 84 to 104 (LPTM…SLAY).

Belongs to the complex I subunit 3 family. In terms of assembly, core subunit of respiratory chain NADH dehydrogenase (Complex I) which is composed of 45 different subunits. Interacts with TMEM186. Interacts with TMEM242.

The protein localises to the mitochondrion inner membrane. The enzyme catalyses a ubiquinone + NADH + 5 H(+)(in) = a ubiquinol + NAD(+) + 4 H(+)(out). Its function is as follows. Core subunit of the mitochondrial membrane respiratory chain NADH dehydrogenase (Complex I) which catalyzes electron transfer from NADH through the respiratory chain, using ubiquinone as an electron acceptor. Essential for the catalytic activity of complex I. The sequence is that of NADH-ubiquinone oxidoreductase chain 3 from Papio hamadryas (Hamadryas baboon).